The primary structure comprises 685 residues: MKRRSVLLSGVALSGTALANDSIFFSPLKYLGAEQQRSIDASRSLLDNLIPPSLPQYDNLAGKLARRAVLTSKKLVYVWTENFANVKGVPMARSVPLGELPNVDWLLKTAGVIVELIVNFVASLPASAAAQFERIAAGLSGDLEAARQVHEALLEEAKNDPAAAGSLLLRFTELQTRVIALLTRVGLLVDDILKSASNLVTQGGQGDGLNRFRAVFGTLRLPEVADSFRDDEAFAYWRVAGPNPLLIRRVDALPANFPLGEEQFRRVMGADDSLLEAAASRRLYLLDYAELGKLAPSGAVDKLLTGTGFAYAPIALFALGKDRAGLLPVAIQCGQDPATHPMFVRPAESESDLYWGWQMAKTVVQVAEENYHEMFVHLAQTHLVSEAFCLATQRTLAPSHPLHVLLAPHFEGTLFINEGAARILLPSAGFIDVMFAAPIQDTQATAGGNRLGFDFYRGMLPESLKARNVDDPAALPDYPYRDDGLLVWNAIRQWAADYVAVYYASDGDVTADVELAAWVGEVIGSGKVAGFRPITGRSQLVEVLTMVIFTASAQHAAVNFPQPSMMTYAPAICAMSAAPAPDSPSGKSEADWLKMMPPTLVALEKVNIYHLLGSVYHGRLGDYRQTGFPYAPVFSDRRVTASGGPLERFQARLKEVEATIRTRNQARRKPYEYLLPSRIPASTNI.

Positions 1 to 19 (MKRRSVLLSGVALSGTALA) are cleaved as a signal peptide. One can recognise a Lipoxygenase domain in the interval 122-685 (ASLPASAAAQ…PSRIPASTNI (564 aa)). Fe cation is bound by residues histidine 377, histidine 382, histidine 555, asparagine 559, and isoleucine 685.

This sequence belongs to the lipoxygenase family. Monomer. Requires Fe cation as cofactor.

It is found in the periplasm. It catalyses the reaction (9Z,12Z)-octadecadienoate + O2 = (9S)-hydroperoxy-(10E,12Z)-octadecadienoate. It carries out the reaction (9Z)-octadecenoate + O2 = (8E,10S)-10-hydroperoxy-octadeca-8-enoate. The enzyme catalyses (9Z,12Z)-octadecadienoate + O2 = (8E,10S,12Z)-10-hydroperoxyoctadeca-8,12-dienoate. The catalysed reaction is (9Z,12Z,15Z)-octadecatrienoate + O2 = (8E,10S,12Z,15Z)-10-hydroperoxyoctadeca-8,12,15-trienoate. It catalyses the reaction (9Z,12Z)-octadecadienoate + O2 = (13S)-hydroperoxy-(9Z,11E)-octadecadienoate. It carries out the reaction (9Z,12Z,15Z)-octadecatrienoate + O2 = (13S)-hydroperoxy-(9Z,11E,15Z)-octadecatrienoate. Inhibited by Ba(2+), Zn(2+) and Fe(3+). In presence of oxygen, converts linoleate into (9S)-hydroperoxy-10,12-octadecenoate (9HPOD), which spontaneously decomposes to the corresponding 9-hydroxy-10,12-octadecenoate (9HOD), and into 13-hydroperoxy-9,11-octadecenoate (13HPOD) which spontaneously decomposes to the corresponding 13-hydroxy-9,11-octadecenoate (13HOD). Also active on linolenate. To a lesser extent, is also able to convert oleate into (10S)-hydroperoxy-8E-octadecenoate, which spontaneously decomposes to the corresponding 10-hydroxy-8E-octadecenoate. Is almost not active on arachidonate. This is Linoleate 9/13-lipoxygenase (lox) from Pseudomonas aeruginosa.